A 166-amino-acid polypeptide reads, in one-letter code: Large ribosomal subunit protein uL10 (166 aa).

Belongs to the universal ribosomal protein uL10 family. In terms of assembly, part of the ribosomal stalk of the 50S ribosomal subunit. The N-terminus interacts with L11 and the large rRNA to form the base of the stalk. The C-terminus forms an elongated spine to which L12 dimers bind in a sequential fashion forming a multimeric L10(L12)X complex.

Forms part of the ribosomal stalk, playing a central role in the interaction of the ribosome with GTP-bound translation factors. This Listeria monocytogenes serotype 4b (strain CLIP80459) protein is Large ribosomal subunit protein uL10.